A 411-amino-acid chain; its full sequence is 2,3-bisphosphoglycerate-independent phosphoglycerate mutase (411 aa).

The protein belongs to the BPG-independent phosphoglycerate mutase family. A-PGAM subfamily.

It carries out the reaction (2R)-2-phosphoglycerate = (2R)-3-phosphoglycerate. The protein operates within carbohydrate degradation; glycolysis; pyruvate from D-glyceraldehyde 3-phosphate: step 3/5. Its function is as follows. Catalyzes the interconversion of 2-phosphoglycerate and 3-phosphoglycerate. This is 2,3-bisphosphoglycerate-independent phosphoglycerate mutase from Thermococcus kodakarensis (strain ATCC BAA-918 / JCM 12380 / KOD1) (Pyrococcus kodakaraensis (strain KOD1)).